Reading from the N-terminus, the 518-residue chain is Serine/threonine-protein kinase PRR1 (518 aa).

Met-1 carries the N-acetylmethionine modification. Over residues 1-12 (MDEYSSIYSQPK) the composition is skewed to polar residues. The disordered stretch occupies residues 1–59 (MDEYSSIYSQPKTPRLKQEGFPDSIGDQHEKALIDENGEEDKKMASTEGTTGDSRSTPL). Over residues 16-45 (LKQEGFPDSIGDQHEKALIDENGEEDKKMA) the composition is skewed to basic and acidic residues. Positions 47–59 (TEGTTGDSRSTPL) are enriched in polar residues. Ser-132 is subject to Phosphoserine. In terms of domain architecture, Protein kinase spans 192–508 (WKKVRPIGSG…INEIYESPFV (317 aa)). ATP is bound by residues 198–206 (IGSGNFSTV) and Lys-225. The active-site Proton acceptor is the Asp-354.

Belongs to the protein kinase superfamily. CAMK Ser/Thr protein kinase family. NIM1 subfamily.

The protein resides in the cytoplasm. The enzyme catalyses L-seryl-[protein] + ATP = O-phospho-L-seryl-[protein] + ADP + H(+). It catalyses the reaction L-threonyl-[protein] + ATP = O-phospho-L-threonyl-[protein] + ADP + H(+). In terms of biological role, protein kinase that functions as a regulator in the pheromone-induced mating pathway downstream of mitogen-activated protein kinase (MAPK) FUS3. Diminishes transcriptional induction of genes in response to pheromone signaling. This Saccharomyces cerevisiae (strain ATCC 204508 / S288c) (Baker's yeast) protein is Serine/threonine-protein kinase PRR1 (PRR1).